Consider the following 472-residue polypeptide: Trigger factor (472 aa).

In terms of domain architecture, PPIase FKBP-type spans 172–257 (GDEVRFDFKG…IKEITSVKPQ (86 aa)). 2 stretches are compositionally biased toward polar residues: residues 439 to 449 (NQPKDTASTLS) and 461 to 472 (KTSNTKKVASKK). Residues 439-472 (NQPKDTASTLSKQEDKPKVAKAKTSNTKKVASKK) are disordered.

The protein belongs to the FKBP-type PPIase family. Tig subfamily.

It is found in the cytoplasm. The catalysed reaction is [protein]-peptidylproline (omega=180) = [protein]-peptidylproline (omega=0). Involved in protein export. Acts as a chaperone by maintaining the newly synthesized protein in an open conformation. Functions as a peptidyl-prolyl cis-trans isomerase. In Ureaplasma urealyticum serovar 10 (strain ATCC 33699 / Western), this protein is Trigger factor.